We begin with the raw amino-acid sequence, 147 residues long: Diuretic hormone 45 (147 aa).

The first 26 residues, 1-26 (MMWWAVWCAAMVAGSVFTAAAPPTDS), serve as a signal peptide directing secretion. A propeptide spanning residues 27–84 (IDLMQMDPSLADDESLGFAMQSLSGRYAAAPWLYLLADVSHDPQRMAEFSQSSGRARP) is cleaved from the precursor. V131 bears the Valine amide mark. Residues 135-147 (GAWGEPASYLYNN) constitute a propeptide that is removed on maturation.

It belongs to the sauvagine/corticotropin-releasing factor/urotensin I family.

It is found in the secreted. Its function is as follows. Regulation of fluid secretion. The sequence is that of Diuretic hormone 45 (dh45) from Bombyx mori (Silk moth).